A 272-amino-acid polypeptide reads, in one-letter code: Tryptophan synthase alpha chain (272 aa).

Catalysis depends on proton acceptor residues Glu-49 and Asp-60.

It belongs to the TrpA family. As to quaternary structure, tetramer of two alpha and two beta chains.

The catalysed reaction is (1S,2R)-1-C-(indol-3-yl)glycerol 3-phosphate + L-serine = D-glyceraldehyde 3-phosphate + L-tryptophan + H2O. Its pathway is amino-acid biosynthesis; L-tryptophan biosynthesis; L-tryptophan from chorismate: step 5/5. Its function is as follows. The alpha subunit is responsible for the aldol cleavage of indoleglycerol phosphate to indole and glyceraldehyde 3-phosphate. This chain is Tryptophan synthase alpha chain, found in Methylibium petroleiphilum (strain ATCC BAA-1232 / LMG 22953 / PM1).